The sequence spans 380 residues: 4-hydroxy-3-methylbut-2-en-1-yl diphosphate synthase (flavodoxin) (380 aa).

The [4Fe-4S] cluster site is built by Cys273, Cys276, Cys308, and Glu315.

Belongs to the IspG family. Requires [4Fe-4S] cluster as cofactor.

The enzyme catalyses (2E)-4-hydroxy-3-methylbut-2-enyl diphosphate + oxidized [flavodoxin] + H2O + 2 H(+) = 2-C-methyl-D-erythritol 2,4-cyclic diphosphate + reduced [flavodoxin]. The protein operates within isoprenoid biosynthesis; isopentenyl diphosphate biosynthesis via DXP pathway; isopentenyl diphosphate from 1-deoxy-D-xylulose 5-phosphate: step 5/6. In terms of biological role, converts 2C-methyl-D-erythritol 2,4-cyclodiphosphate (ME-2,4cPP) into 1-hydroxy-2-methyl-2-(E)-butenyl 4-diphosphate. This Leifsonia xyli subsp. xyli (strain CTCB07) protein is 4-hydroxy-3-methylbut-2-en-1-yl diphosphate synthase (flavodoxin).